A 1461-amino-acid polypeptide reads, in one-letter code: DNA topoisomerase 2 (1461 aa).

Over residues 1–17 the composition is skewed to acidic residues; the sequence is MSESESDYFTDGSEDDF. A disordered region spans residues 1 to 61; sequence MSESESDYFT…TPKPTNASET (61 aa). Residues 41-52 show a composition bias toward low complexity; sequence TNSTVSSSRSST. Residues Asn-120, Asn-149, 177–179, and 190–197 each bind ATP; these read SSN and GRNGFGAK. The segment at 382 to 389 is interaction with DNA; that stretch reads SKKEKGKK. Position 418–420 (418–420) interacts with ATP; sequence QTK. The region spanning 498 to 614 is the Toprim domain; sequence CTLILTEGLS…GLLDIPGFLL (117 aa). Residues Glu-504, Asp-583, and Asp-585 each contribute to the Mg(2+) site. A Topo IIA-type catalytic domain is found at 752–1226; it reads IPSVLDGFKP…SAKDLWNQDL (475 aa). Tyr-842 serves as the catalytic O-(5'-phospho-DNA)-tyrosine intermediate. The interval 1024–1033 is interaction with DNA; sequence KLVSSLSLAN. Disordered stretches follow at residues 1122–1155 and 1244–1461; these read DGKP…DVGN and RESL…IVDE. A compositionally biased stretch (acidic residues) spans 1133–1153; it reads LTGDDADEEEETQEQEGDEDV. A compositionally biased stretch (basic residues) spans 1251 to 1261; that stretch reads GKKKSTKRRAK. Composition is skewed to basic and acidic residues over residues 1274-1283 and 1406-1417; these read VKVEPKEKKS and DKPEPKERRTRE. Positions 1434–1461 are enriched in acidic residues; the sequence is DSDDEDEDEEDDIVMSDGDDDDDFIVDE.

This sequence belongs to the type II topoisomerase family. As to quaternary structure, homodimer. Mg(2+) is required as a cofactor. Requires Mn(2+) as cofactor. It depends on Ca(2+) as a cofactor.

The protein resides in the nucleus. It carries out the reaction ATP-dependent breakage, passage and rejoining of double-stranded DNA.. Functionally, control of topological states of DNA by transient breakage and subsequent rejoining of DNA strands. Topoisomerase II makes double-strand breaks. This Candida albicans (Yeast) protein is DNA topoisomerase 2 (TOP2).